A 990-amino-acid polypeptide reads, in one-letter code: Protein argonaute 7 (990 aa).

The segment covering 1 to 13 (MEEKTHHHHHSTN) has biased composition (basic residues). The tract at residues 1–25 (MEEKTHHHHHSTNKHIPSSKSRTPL) is disordered. One can recognise a PAZ domain in the interval 379–484 (EFLTDLPRNK…LPMELCMICE (106 aa)). The region spanning 649-950 (LIICVMEKKH…AAYRGRLYIE (302 aa)) is the Piwi domain. The interval 953 to 973 (SESNGGSMNPSSVSRVGPPKT) is disordered. Positions 954-966 (ESNGGSMNPSSVS) are enriched in polar residues.

The protein belongs to the argonaute family. Ago subfamily. Expressed in leaves and floral buds, and at low levels in roots.

In terms of biological role, involved in RNA-mediated post-transcriptional gene silencing (PTGS). Main component of the RNA-induced silencing complex (RISC) that binds to a short guide RNA such as a microRNA (miRNA) or small interfering RNA (siRNA). RISC uses the mature miRNA or siRNA as a guide for slicer-directed cleavage of homologous mRNAs to repress gene expression. Required for the processing of 21 nucleotide trans-acting siRNAs (ta-siRNAs) derived from TAS3a transcripts. Associates preferentially with the microRNA (miRNA) miR390 which guides the cleavage of TAS3 precursor RNA. Seems to act as miR390 specific slicer. Associates mainly with small RNAs of 21 nucleotide in length and with a 5' terminal adenosine. Acts in the RDR6/SGS3/DCL4/AGO7 trans-acting siRNA pathway involved in leaf developmental timing. Does not seem to act on leaf polarity. Required for the production of the 30-40nt bacterial-induced long siRNAs (lsiRNA). Involved in antiviral RNA silencing by contributing to efficient viral RNAs clearance. Targets less structured viral RNAs than AGO1 which is capable of targeting RNAs with more compact structures. The chain is Protein argonaute 7 (AGO7) from Arabidopsis thaliana (Mouse-ear cress).